Reading from the N-terminus, the 352-residue chain is MLYLTNYTDYMFFSYISVRAGFAFFIALFLSLYFMPKFIKWAQNKKANQPIYEYAPQSHQAKSHTPTMGGLIFIFATIVASLLCADLNNFYVIIGILCLVLFCTIGLVDDLGKILKKDNHAGLSPRMKLLSQFIASFICVFFLYIMGINTEFYLPFYKYALFDGGIFMLALWILVIISSSNAVNLTDGLDGLATVPSIFSLLSLSAFLYLSGNAIYSSYLFLPKIQGLGELVVLSAALVGALMGFLWYNCYPAQVFMGDSGSLSIGAFLGYLGIVSKNEILLLLIGFVFVLETISVILQVGSFKIFNKRVFKMAPIHHHFEKIGWVENKIIVRFWMIALLANIIALISIKLR.

The next 10 membrane-spanning stretches (helical) occupy residues 10–30 (YMFF…ALFL), 67–87 (TMGG…CADL), 88–108 (NNFY…IGLV), 129–149 (LLSQ…MGIN), 159–179 (YALF…IISS), 191–211 (GLAT…LYLS), 227–247 (GLGE…GFLW), 255–275 (VFMG…LGIV), 280–300 (ILLL…ILQV), and 329–349 (KIIV…LISI).

The protein belongs to the glycosyltransferase 4 family. MraY subfamily. Mg(2+) serves as cofactor.

The protein localises to the cell inner membrane. The catalysed reaction is UDP-N-acetyl-alpha-D-muramoyl-L-alanyl-gamma-D-glutamyl-meso-2,6-diaminopimeloyl-D-alanyl-D-alanine + di-trans,octa-cis-undecaprenyl phosphate = di-trans,octa-cis-undecaprenyl diphospho-N-acetyl-alpha-D-muramoyl-L-alanyl-D-glutamyl-meso-2,6-diaminopimeloyl-D-alanyl-D-alanine + UMP. Its pathway is cell wall biogenesis; peptidoglycan biosynthesis. Its function is as follows. Catalyzes the initial step of the lipid cycle reactions in the biosynthesis of the cell wall peptidoglycan: transfers peptidoglycan precursor phospho-MurNAc-pentapeptide from UDP-MurNAc-pentapeptide onto the lipid carrier undecaprenyl phosphate, yielding undecaprenyl-pyrophosphoryl-MurNAc-pentapeptide, known as lipid I. This Campylobacter lari (strain RM2100 / D67 / ATCC BAA-1060) protein is Phospho-N-acetylmuramoyl-pentapeptide-transferase.